Reading from the N-terminus, the 165-residue chain is Large ribosomal subunit protein uL10 (165 aa).

The protein belongs to the universal ribosomal protein uL10 family. As to quaternary structure, part of the ribosomal stalk of the 50S ribosomal subunit. The N-terminus interacts with L11 and the large rRNA to form the base of the stalk. The C-terminus forms an elongated spine to which L12 dimers bind in a sequential fashion forming a multimeric L10(L12)X complex.

Its function is as follows. Forms part of the ribosomal stalk, playing a central role in the interaction of the ribosome with GTP-bound translation factors. This chain is Large ribosomal subunit protein uL10, found in Mycoplasma capricolum subsp. capricolum (strain California kid / ATCC 27343 / NCTC 10154).